Consider the following 320-residue polypeptide: Malate dehydrogenase (320 aa).

NAD(+) contacts are provided by residues 10-15 and D34; that span reads GSGMIG. The substrate site is built by R83 and R89. NAD(+) contacts are provided by residues N96 and 119-121; that span reads ITN. Residues N121 and R152 each contribute to the substrate site. H176 functions as the Proton acceptor in the catalytic mechanism.

The protein belongs to the LDH/MDH superfamily. MDH type 3 family.

The enzyme catalyses (S)-malate + NAD(+) = oxaloacetate + NADH + H(+). Its function is as follows. Catalyzes the reversible oxidation of malate to oxaloacetate. In Bartonella henselae (strain ATCC 49882 / DSM 28221 / CCUG 30454 / Houston 1) (Rochalimaea henselae), this protein is Malate dehydrogenase.